The chain runs to 929 residues: Protein translocase subunit SecA (929 aa).

ATP is bound by residues Q87, 105–109, and D512; that span reads GEGKT. C914, C916, C925, and H926 together coordinate Zn(2+).

Belongs to the SecA family. Monomer and homodimer. Part of the essential Sec protein translocation apparatus which comprises SecA, SecYEG and auxiliary proteins SecDF-YajC and YidC. Zn(2+) serves as cofactor.

Its subcellular location is the cell inner membrane. It is found in the cytoplasm. The enzyme catalyses ATP + H2O + cellular proteinSide 1 = ADP + phosphate + cellular proteinSide 2.. In terms of biological role, part of the Sec protein translocase complex. Interacts with the SecYEG preprotein conducting channel. Has a central role in coupling the hydrolysis of ATP to the transfer of proteins into and across the cell membrane, serving both as a receptor for the preprotein-SecB complex and as an ATP-driven molecular motor driving the stepwise translocation of polypeptide chains across the membrane. The chain is Protein translocase subunit SecA from Psychrobacter arcticus (strain DSM 17307 / VKM B-2377 / 273-4).